Reading from the N-terminus, the 891-residue chain is Bifunctional aldehyde-alcohol dehydrogenase AdhE (891 aa).

The tract at residues 2–440 (AVTNVAELNA…ENVGPKHLIN (439 aa)) is aldehyde dehydrogenase. Residues 110 to 115 (IVPTTN), Gly-195, and Gly-213 contribute to the NAD(+) site. Cys-246 serves as the catalytic Nucleophile. 2 residues coordinate NAD(+): Glu-335 and Leu-419. Positions 441 to 448 (KKTVAKRA) are linker. The alcohol dehydrogenase stretch occupies residues 449 to 891 (ENMLWHKLPK…KAEKKAKKSA (443 aa)). NAD(+)-binding positions include Asp-487, Asp-519, 546-550 (GSPMD), 597-598 (TT), Val-610, Lys-619, and Leu-638. Residues Asp-653, His-657, His-723, and His-737 each coordinate Fe cation.

In the N-terminal section; belongs to the aldehyde dehydrogenase family. The protein in the C-terminal section; belongs to the iron-containing alcohol dehydrogenase family. Forms long filaments, called spirosomes. It depends on Fe(2+) as a cofactor.

It carries out the reaction acetaldehyde + NAD(+) + CoA = acetyl-CoA + NADH + H(+). It catalyses the reaction ethanol + NAD(+) = acetaldehyde + NADH + H(+). The enzyme catalyses a primary alcohol + NAD(+) = an aldehyde + NADH + H(+). In terms of biological role, under fermentative conditions, catalyzes the sequential NADH-dependent reduction of acetyl-CoA to acetaldehyde and then to ethanol. Plays an important role in virulence and is critical for proper regulation of virulence gene expression. In Escherichia coli O157:H7, this protein is Bifunctional aldehyde-alcohol dehydrogenase AdhE.